The chain runs to 418 residues: MFRRLLIATVVGILAVFAVAGFRHAMLLLEWLFLNNDSGSLVNAATNLSSWRRLLTPALGGLAAGLLLMGWQKFTQQRPHAPTDYMEALQTDGQFDYAASLVKSLASLLVVTSGSAIGREGAMILLAALAASCFAQRFTPRQEWKLWIACGAAAGMAAAYRAPLAGSLFIAEVLFGTMMLASLGPVIISAIVAWLVSNLINHSDALLYNVQLSVTVQARDYALIISTGVLAGLCGPLLLTLMNACHRGFVSLKLAPPWQLALGGLIVGLLSLFTPAVWGNGYSTVQSFLTAPPLLMIIAGIFLCKLCAVLASSGSGAPGGVFTPTLFIGLAIGMLYGRSLGLWFPDGEEITLLLGLTGMATLLAATTHAPIMSTLMICEMTGEYQLLPGLLIACVIASVISRTLHRDSIYRQHTAQHS.

The Cytoplasmic segment spans residues 1-4 (MFRR). A helical transmembrane segment spans residues 5–25 (LLIATVVGILAVFAVAGFRHA). The Periplasmic portion of the chain corresponds to 26–53 (MLLLEWLFLNNDSGSLVNAATNLSSWRR). Residues 54 to 74 (LLTPALGGLAAGLLLMGWQKF) form a helical membrane-spanning segment. Over 75–145 (TQQRPHAPTD…QRFTPRQEWK (71 aa)) the chain is Cytoplasmic. The chain crosses the membrane as a helical span at residues 146 to 166 (LWIACGAAAGMAAAYRAPLAG). Over 167 to 172 (SLFIAE) the chain is Periplasmic. The helical transmembrane segment at 173–193 (VLFGTMMLASLGPVIISAIVA) threads the bilayer. Residues 194–221 (WLVSNLINHSDALLYNVQLSVTVQARDY) are Cytoplasmic-facing. A helical transmembrane segment spans residues 222-242 (ALIISTGVLAGLCGPLLLTLM). The Periplasmic portion of the chain corresponds to 243–257 (NACHRGFVSLKLAPP). A helical transmembrane segment spans residues 258 to 278 (WQLALGGLIVGLLSLFTPAVW). Residues 279-290 (GNGYSTVQSFLT) lie on the Cytoplasmic side of the membrane. The helical transmembrane segment at 291–311 (APPLLMIIAGIFLCKLCAVLA) threads the bilayer. The Periplasmic segment spans residues 312–315 (SSGS). A helical membrane pass occupies residues 316-336 (GAPGGVFTPTLFIGLAIGMLY). Residues 337-351 (GRSLGLWFPDGEEIT) are Cytoplasmic-facing. A helical transmembrane segment spans residues 352–372 (LLLGLTGMATLLAATTHAPIM). Topologically, residues 373–379 (STLMICE) are periplasmic. A helical transmembrane segment spans residues 380 to 400 (MTGEYQLLPGLLIACVIASVI). Residues 401–418 (SRTLHRDSIYRQHTAQHS) are Cytoplasmic-facing.

The protein belongs to the chloride channel (TC 2.A.49) family. ClcB subfamily.

The protein localises to the cell inner membrane. Functionally, probably acts as an electrical shunt for an outwardly-directed proton pump that is linked to amino acid decarboxylation, as part of the extreme acid resistance (XAR) response. The sequence is that of Voltage-gated ClC-type chloride channel ClcB (clcB) from Shigella flexneri.